The following is a 195-amino-acid chain: MNLSATLILAFGMSMDAFAASVGKGATLHKPALREALRTGLIFGVIEAITPLIGWGLGLLSSQYIMRWDHWVAFTLLAFLGGRMVLAGWKQQPLETSLVGKHSLGVLIATAIATSLDALAIGVGLAMLQVNILHAALLIGLATLIMSTIGMLLGRFVGPCLGSKAEIIGGLILIGIGCNILYSHIGEAMLAHLPG.

The next 6 membrane-spanning stretches (helical) occupy residues 3–23, 40–60, 68–88, 106–126, 132–152, and 165–185; these read LSATLILAFGMSMDAFAASVG, GLIFGVIEAITPLIGWGLGLL, WDHWVAFTLLAFLGGRMVLAG, VLIATAIATSLDALAIGVGLA, ILHAALLIGLATLIMSTIGML, and AEIIGGLILIGIGCNILYSHI.

This sequence belongs to the MntP (TC 9.B.29) family.

The protein resides in the cell inner membrane. In terms of biological role, probably functions as a manganese efflux pump. This Sodalis glossinidius (strain morsitans) protein is Putative manganese efflux pump MntP.